Here is a 652-residue protein sequence, read N- to C-terminus: DNA ligase (652 aa).

NAD(+)-binding positions include 29 to 33 (DSEYD), 78 to 79 (SL), and Glu-107. Lys-109 serves as the catalytic N6-AMP-lysine intermediate. Residues Arg-130, Glu-164, Lys-278, and Lys-302 each coordinate NAD(+). Residues Cys-395, Cys-398, Cys-413, and Cys-418 each contribute to the Zn(2+) site. The region spanning 577 to 652 (VADAALSGLT…VRDEAWLESL (76 aa)) is the BRCT domain.

Belongs to the NAD-dependent DNA ligase family. LigA subfamily. Requires Mg(2+) as cofactor. The cofactor is Mn(2+).

It carries out the reaction NAD(+) + (deoxyribonucleotide)n-3'-hydroxyl + 5'-phospho-(deoxyribonucleotide)m = (deoxyribonucleotide)n+m + AMP + beta-nicotinamide D-nucleotide.. Functionally, DNA ligase that catalyzes the formation of phosphodiester linkages between 5'-phosphoryl and 3'-hydroxyl groups in double-stranded DNA using NAD as a coenzyme and as the energy source for the reaction. It is essential for DNA replication and repair of damaged DNA. This chain is DNA ligase, found in Streptococcus pneumoniae serotype 4 (strain ATCC BAA-334 / TIGR4).